Reading from the N-terminus, the 370-residue chain is MLYLLYEWLARSQEHLPALNLLKYLTFRSGMAMLTAYIVAVAMGSRFIRWMKAKQGKGQPIRTDGIARHVTEKAGTPTMGGFMILAGLFVAALLWADLRNVHVWVVLLITGSYGLLGFMDDYAKVTKQTTAGLSSVQKLVAQFIVAIIATVILILFAPKSPMTPGMETSLVFPIFKALVINLGWFYVAFAAFTIAGFSNAVNLTDGLDGLAIVPVMFAASTFGLIAYLVGNYKFADYLNLHFAPGVGELAVLCGAIIGGGMGFLWYNAPPAKIFMGDTGSLALGGALGAIAVCAKHELVLGIVGGLFVAEALSVMIQVAYFKKTGKRVFLMAPIHHHFEKLGWPESTVVIRFWIVSMILAFIGLATLKLR.

10 consecutive transmembrane segments (helical) span residues 24–44 (YLTF…VAMG), 78–98 (TMGG…WADL), 103–123 (VWVV…DDYA), 138–158 (KLVA…LFAP), 177–197 (ALVI…IAGF), 209–229 (GLAI…AYLV), 245–265 (GVGE…GFLW), 273–293 (IFMG…IAVC), 298–318 (LVLG…MIQV), and 347–367 (TVVI…LATL).

This sequence belongs to the glycosyltransferase 4 family. MraY subfamily. Mg(2+) is required as a cofactor.

Its subcellular location is the cell inner membrane. It carries out the reaction UDP-N-acetyl-alpha-D-muramoyl-L-alanyl-gamma-D-glutamyl-meso-2,6-diaminopimeloyl-D-alanyl-D-alanine + di-trans,octa-cis-undecaprenyl phosphate = di-trans,octa-cis-undecaprenyl diphospho-N-acetyl-alpha-D-muramoyl-L-alanyl-D-glutamyl-meso-2,6-diaminopimeloyl-D-alanyl-D-alanine + UMP. It functions in the pathway cell wall biogenesis; peptidoglycan biosynthesis. In terms of biological role, catalyzes the initial step of the lipid cycle reactions in the biosynthesis of the cell wall peptidoglycan: transfers peptidoglycan precursor phospho-MurNAc-pentapeptide from UDP-MurNAc-pentapeptide onto the lipid carrier undecaprenyl phosphate, yielding undecaprenyl-pyrophosphoryl-MurNAc-pentapeptide, known as lipid I. The polypeptide is Phospho-N-acetylmuramoyl-pentapeptide-transferase (Caulobacter vibrioides (strain NA1000 / CB15N) (Caulobacter crescentus)).